The following is a 136-amino-acid chain: Urease subunit beta (136 aa).

The interval glutamate 112–serine 136 is disordered.

The protein belongs to the urease beta subunit family. In terms of assembly, heterotrimer of UreA (gamma), UreB (beta) and UreC (alpha) subunits. Three heterotrimers associate to form the active enzyme.

The protein localises to the cytoplasm. The catalysed reaction is urea + 2 H2O + H(+) = hydrogencarbonate + 2 NH4(+). It participates in nitrogen metabolism; urea degradation; CO(2) and NH(3) from urea (urease route): step 1/1. This is Urease subunit beta from Staphylococcus aureus (strain MRSA252).